Reading from the N-terminus, the 404-residue chain is MLRAIAEERGRLSLRREVCGLGCFKDDRIVFWTWMFSTYFMEKLAPRQDDMLFYVRRKRAYTGSESTADGRKAEAEPEVEVEVYRRDSKKLPGLGDPDIDWEESVCLNLILQKLDYMVTCAVCTRADGGDIHIHRKKSQQVFASPSKHPMDSKGEESKMSYPNIFFMIDSFEEVFSDMTVGEGEMVCVELVASDKTNMFQGVIFQGSIRYEALKKVYDNRVSVAARMAQKMSFGFYKYNNMEFVRMKGPQGKGHAEMAVSRVSTGDTSPYGTEDSSPASPMHERVTSFSTPPTPERNNRPAFFSPSLKRKVPRNRIAEMKKSHSANDSEEFFREDDGGADLHNATNLRSRSLSGTGRSLVGSWLKLSRADGNFLLYAHLTYVTLPLHRILTDILEVRQKPILMT.

Positions 262–278 (VSTGDTSPYGTEDSSPA) are enriched in polar residues. Disordered stretches follow at residues 262 to 307 (VSTG…SPSL) and 320 to 340 (KKSH…GGAD). 3 positions are modified to phosphoserine: Ser268, Ser276, and Ser279. 2 positions are modified to phosphothreonine: Thr290 and Thr293. Phosphoserine is present on residues Ser304, Ser306, Ser324, Ser358, and Ser362. Basic and acidic residues predominate over residues 320-336 (KKSHSANDSEEFFREDD).

This is an uncharacterized protein from Rattus norvegicus (Rat).